The sequence spans 20 residues: Pregnancy-associated glycoprotein 67A (20 aa).

N-linked (GlcNAc...) asparagine glycans are attached at residues N4 and N20.

The protein belongs to the peptidase A1 family. As to expression, chorionic epithelium (trophectoderm) and placental cotyledons.

It localises to the secreted. Its subcellular location is the extracellular space. The polypeptide is Pregnancy-associated glycoprotein 67A (Bison bonasus (European bison)).